Reading from the N-terminus, the 373-residue chain is Chaperone protein DnaJ (373 aa).

Positions 4 to 68 constitute a J domain; sequence NYYQILGVSK…QKRAAYDRLG (65 aa). The segment at 136–214 adopts a CR-type zinc-finger fold; the sequence is GIEKNINFSS…CHGMGRYHKQ (79 aa). Cysteine 149, cysteine 152, cysteine 166, cysteine 169, cysteine 188, cysteine 191, cysteine 202, and cysteine 205 together coordinate Zn(2+). 4 CXXCXGXG motif repeats span residues 149-156, 166-173, 188-195, and 202-209; these read CDTCHGSG, CDACSGVG, CHKCQGNG, and CKKCHGMG.

This sequence belongs to the DnaJ family. As to quaternary structure, homodimer. Requires Zn(2+) as cofactor.

The protein resides in the cytoplasm. Functionally, participates actively in the response to hyperosmotic and heat shock by preventing the aggregation of stress-denatured proteins and by disaggregating proteins, also in an autonomous, DnaK-independent fashion. Unfolded proteins bind initially to DnaJ; upon interaction with the DnaJ-bound protein, DnaK hydrolyzes its bound ATP, resulting in the formation of a stable complex. GrpE releases ADP from DnaK; ATP binding to DnaK triggers the release of the substrate protein, thus completing the reaction cycle. Several rounds of ATP-dependent interactions between DnaJ, DnaK and GrpE are required for fully efficient folding. Also involved, together with DnaK and GrpE, in the DNA replication of plasmids through activation of initiation proteins. This chain is Chaperone protein DnaJ, found in Rickettsia rickettsii (strain Iowa).